The sequence spans 163 residues: MINKKQSLTLLSAIALSVSLSACSVFDWLIYKPDIPQGNYMEPQQVEKLRIDMTKEQAEYILGRPVLRDSFADDTWYYVYHYKSGRDASITHKELILHFTGNKLSLVKGDYELSPEFNTPLEQSKLPMVNTTESAPQVPAQRPDEKPLVKENQTEAQVQKPIK.

The N-terminal stretch at 1–22 (MINKKQSLTLLSAIALSVSLSA) is a signal peptide. Residue Cys23 is the site of N-palmitoyl cysteine attachment. A lipid anchor (S-diacylglycerol cysteine) is attached at Cys23. Residues 122–163 (EQSKLPMVNTTESAPQVPAQRPDEKPLVKENQTEAQVQKPIK) are disordered. A compositionally biased stretch (basic and acidic residues) spans 142 to 153 (RPDEKPLVKENQ).

It belongs to the BamE family. In terms of assembly, part of the Bam complex.

It localises to the cell outer membrane. Its function is as follows. Part of the outer membrane protein assembly complex, which is involved in assembly and insertion of beta-barrel proteins into the outer membrane. This Shewanella oneidensis (strain ATCC 700550 / JCM 31522 / CIP 106686 / LMG 19005 / NCIMB 14063 / MR-1) protein is Outer membrane protein assembly factor BamE.